Here is a 483-residue protein sequence, read N- to C-terminus: Low-density lipoprotein receptor-related protein 11 (483 aa).

Residues methionine 1–proline 32 form the signal peptide. Residues glycine 33–glycine 433 are Extracellular-facing. The 88-residue stretch at alanine 85–tyrosine 172 folds into the MANSC domain. Asparagine 152 and asparagine 275 each carry an N-linked (GlcNAc...) asparagine glycan. Residues proline 193–threonine 287 form the PKD domain. In terms of domain architecture, LDL-receptor class A spans alanine 293–glutamine 329. 3 disulfides stabilise this stretch: cysteine 294–cysteine 306, cysteine 301–cysteine 319, and cysteine 313–cysteine 328. The interval alanine 346–proline 428 is disordered. Composition is skewed to polar residues over residues arginine 367 to threonine 376 and histidine 385 to lysine 407. N-linked (GlcNAc...) asparagine glycosylation occurs at asparagine 403. Residues asparagine 408 to serine 418 show a composition bias toward basic and acidic residues. A helical transmembrane segment spans residues alanine 434 to leucine 456. Topologically, residues arginine 457–leucine 483 are cytoplasmic. At serine 474 the chain carries Phosphoserine.

The protein belongs to the LDLR family.

It localises to the membrane. In Mus musculus (Mouse), this protein is Low-density lipoprotein receptor-related protein 11 (Lrp11).